We begin with the raw amino-acid sequence, 340 residues long: Aurora kinase A- and ninein-interacting protein (340 aa).

Residues 175-340 (QREAKRKGEG…DSEGNRVIRH (166 aa)) form an interaction with AURKA region. Positions 178 to 190 (AKRKGEGLRESKT) are enriched in basic and acidic residues. The interval 178–209 (AKRKGEGLRESKTDCPGMGSHIRPPGSKCHQP) is disordered. The tract at residues 266–340 (RDSWSQLFTE…DSEGNRVIRH (75 aa)) is interaction with RBBP8/CtIP. A Phosphoserine modification is found at Ser-277. The segment at 293-317 (DVTNARNQGSGQFPDSPQAQGQDGP) is disordered. A compositionally biased stretch (polar residues) spans 296–313 (NARNQGSGQFPDSPQAQG).

Belongs to the AUNIP family. As to quaternary structure, interacts (via C-terminus) with AURKA (via C-terminus). Interacts (via N-terminus) with NIN; this interaction blocks NIN phosphorylation by both AURKA and GSK3B. Identified in a complex with NIN and AURKA. Interacts with RBBP8/CtIP.

Its subcellular location is the nucleus. The protein localises to the chromosome. The protein resides in the cytoplasm. It is found in the cytoskeleton. It localises to the microtubule organizing center. Its subcellular location is the centrosome. The protein localises to the spindle pole. Its function is as follows. DNA-binding protein that accumulates at DNA double-strand breaks (DSBs) following DNA damage and promotes DNA resection and homologous recombination. Serves as a sensor of DNA damage: binds DNA with a strong preference for DNA substrates that mimic structures generated at stalled replication forks, and anchors RBBP8/CtIP to DSB sites to promote DNA end resection and ensuing homologous recombination repair. Inhibits non-homologous end joining (NHEJ). Required for the dynamic movement of AURKA at the centrosomes and spindle apparatus during the cell cycle. The polypeptide is Aurora kinase A- and ninein-interacting protein (Mus musculus (Mouse)).